Consider the following 899-residue polypeptide: Bifunctional uridylyltransferase/uridylyl-removing enzyme (899 aa).

Positions 1 to 347 (MFISDPTDSL…PESERPEKSV (347 aa)) are uridylyltransferase. The tract at residues 348 to 718 (LNARFNRVGD…EHRELALDAV (371 aa)) is uridylyl-removing. In terms of domain architecture, HD spans 465–581 (VDAHILLLIR…TKFANLVGNV (117 aa)). ACT domains lie at 719–804 (QIFI…RLPR) and 827–899 (VMSL…TPSC).

Belongs to the GlnD family. Mg(2+) is required as a cofactor.

It catalyses the reaction [protein-PII]-L-tyrosine + UTP = [protein-PII]-uridylyl-L-tyrosine + diphosphate. It carries out the reaction [protein-PII]-uridylyl-L-tyrosine + H2O = [protein-PII]-L-tyrosine + UMP + H(+). With respect to regulation, uridylyltransferase (UTase) activity is inhibited by glutamine, while glutamine activates uridylyl-removing (UR) activity. In terms of biological role, modifies, by uridylylation and deuridylylation, the PII regulatory proteins (GlnB and homologs), in response to the nitrogen status of the cell that GlnD senses through the glutamine level. Under low glutamine levels, catalyzes the conversion of the PII proteins and UTP to PII-UMP and PPi, while under higher glutamine levels, GlnD hydrolyzes PII-UMP to PII and UMP (deuridylylation). Thus, controls uridylylation state and activity of the PII proteins, and plays an important role in the regulation of nitrogen assimilation and metabolism. The protein is Bifunctional uridylyltransferase/uridylyl-removing enzyme of Psychrobacter sp. (strain PRwf-1).